The primary structure comprises 38 residues: Photosystem I reaction center subunit IX (38 aa).

The chain crosses the membrane as a helical span at residues 4–24; that stretch reads FLTTAPVVAAIWFTATAGILI.

This sequence belongs to the PsaJ family.

The protein resides in the cellular thylakoid membrane. May help in the organization of the PsaE and PsaF subunits. This is Photosystem I reaction center subunit IX from Synechococcus sp. (strain CC9902).